We begin with the raw amino-acid sequence, 670 residues long: DNA ligase (670 aa).

NAD(+) contacts are provided by residues 31 to 35 (DAEYD), 76 to 77 (SL), and glutamate 108. Lysine 110 functions as the N6-AMP-lysine intermediate in the catalytic mechanism. NAD(+)-binding residues include arginine 131, glutamate 166, lysine 271, and lysine 295. Positions 388, 391, 406, and 412 each coordinate Zn(2+). The region spanning 579–668 (NIGGSLSGKK…NTPALKKETS (90 aa)) is the BRCT domain.

The protein belongs to the NAD-dependent DNA ligase family. LigA subfamily. Mg(2+) serves as cofactor. Mn(2+) is required as a cofactor.

It catalyses the reaction NAD(+) + (deoxyribonucleotide)n-3'-hydroxyl + 5'-phospho-(deoxyribonucleotide)m = (deoxyribonucleotide)n+m + AMP + beta-nicotinamide D-nucleotide.. In terms of biological role, DNA ligase that catalyzes the formation of phosphodiester linkages between 5'-phosphoryl and 3'-hydroxyl groups in double-stranded DNA using NAD as a coenzyme and as the energy source for the reaction. It is essential for DNA replication and repair of damaged DNA. This chain is DNA ligase, found in Neorickettsia sennetsu (strain ATCC VR-367 / Miyayama) (Ehrlichia sennetsu).